The chain runs to 440 residues: Chromosome partition protein MukF (440 aa).

The tract at residues 208-236 is leucine-zipper; sequence LSETSGTLRELQDTLEAAGDKLQANLLRI.

This sequence belongs to the MukF family. In terms of assembly, interacts, and probably forms a ternary complex, with MukE and MukB via its C-terminal region. The complex formation is stimulated by calcium or magnesium. It is required for an interaction between MukE and MukB.

It localises to the cytoplasm. The protein localises to the nucleoid. In terms of biological role, involved in chromosome condensation, segregation and cell cycle progression. May participate in facilitating chromosome segregation by condensation DNA from both sides of a centrally located replisome during cell division. Not required for mini-F plasmid partitioning. Probably acts via its interaction with MukB and MukE. Overexpression results in anucleate cells. It has a calcium binding activity. This is Chromosome partition protein MukF from Escherichia coli (strain UTI89 / UPEC).